The following is a 391-amino-acid chain: Polyketide synthase 3 (391 aa).

Residue Cys-164 is part of the active site.

The protein belongs to the thiolase-like superfamily. Chalcone/stilbene synthases family. In terms of assembly, homodimer.

The catalysed reaction is (E)-4-coumaroyl-CoA + 3 malonyl-CoA + 3 H(+) = 2',4,4',6'-tetrahydroxychalcone + 3 CO2 + 4 CoA. It participates in secondary metabolite biosynthesis; flavonoid biosynthesis. Polyketide synthase producing p-coumaryltriacetic acid lactone (CTAL) and slightly naringenin chalcone. Can use p-coumaryl-CoA as substrate. The sequence is that of Polyketide synthase 3 (PKS3) from Rubus idaeus (Raspberry).